Here is a 268-residue protein sequence, read N- to C-terminus: AN1-type zinc finger protein 1 (268 aa).

Position 2 is an N-acetylalanine (Ala2). 2 consecutive AN1-type zinc fingers follow at residues 4–52 (LDIG…VVKE) and 58–106 (EHKS…VAKP). Zn(2+)-binding residues include Cys10, Cys15, Cys25, Cys28, Cys33, His36, His42, Cys44, Cys64, Cys69, Cys79, Cys82, Cys87, His90, His96, and Cys98. The segment at 160-260 (QTERTYFQVY…EYLNDEEQFL (101 aa)) is ubiquitin-like.

Associates with the 26S proteasome; this association occurs upon exposure to arsenite and is reduced in the presence of ATP. Interacts (via AN1-type 1 and 2 zinc fingers) with PSMD1; this interaction is increased upon arsenite treatment and occurs in an ATP-independent manner. Interacts with PSMC4. Interacts with PSMA1. Interacts (via its ubiquitin-like region) with VCP; this interaction occurs in an arsenite-dependent manner and is necessary for the recruitment of the ubiquitin-selective ATPase VCP to stress granules (SGs).

Its subcellular location is the cytoplasm. It localises to the stress granule. Plays a role in the regulation of cytoplasmic stress granules (SGs) turnover. SGs are dynamic and transient cytoplasmic ribonucleoprotein assemblies important for cellular protein homeostasis when protein production is suspended after acute exogenous stress. Associates with SGs and is involved in the efficient and specific arsenite-induced clearance process of SGs through the recruitment of the ubiquitin-selective ATPase VCP and the 26S proteasome. This process requires both complexes for efficient degradation of damaged ubiquitinated SG proteins during recovery from arsenite stress, and hence avoiding aberrant cytoplasmic SGs degradation via autophagy. The sequence is that of AN1-type zinc finger protein 1 from Mus musculus (Mouse).